Consider the following 293-residue polypeptide: Diaminopimelate epimerase (293 aa).

The substrate site is built by asparagine 15, glutamine 47, and asparagine 67. Residue cysteine 76 is the Proton donor of the active site. Substrate contacts are provided by residues 77–78, asparagine 163, asparagine 197, and 215–216; these read GN and ER. Cysteine 224 (proton acceptor) is an active-site residue. 225-226 is a binding site for substrate; it reads GS.

It belongs to the diaminopimelate epimerase family. Homodimer.

The protein localises to the cytoplasm. It catalyses the reaction (2S,6S)-2,6-diaminopimelate = meso-2,6-diaminopimelate. It participates in amino-acid biosynthesis; L-lysine biosynthesis via DAP pathway; DL-2,6-diaminopimelate from LL-2,6-diaminopimelate: step 1/1. Catalyzes the stereoinversion of LL-2,6-diaminopimelate (L,L-DAP) to meso-diaminopimelate (meso-DAP), a precursor of L-lysine and an essential component of the bacterial peptidoglycan. The polypeptide is Diaminopimelate epimerase (Chelativorans sp. (strain BNC1)).